A 206-amino-acid chain; its full sequence is Urease accessory protein UreG (206 aa).

11 to 18 (GPVGSGKT) is a GTP binding site.

This sequence belongs to the SIMIBI class G3E GTPase family. UreG subfamily. In terms of assembly, homodimer. UreD, UreF and UreG form a complex that acts as a GTP-hydrolysis-dependent molecular chaperone, activating the urease apoprotein by helping to assemble the nickel containing metallocenter of UreC. The UreE protein probably delivers the nickel.

It localises to the cytoplasm. Facilitates the functional incorporation of the urease nickel metallocenter. This process requires GTP hydrolysis, probably effectuated by UreG. This chain is Urease accessory protein UreG, found in Mycolicibacterium gilvum (strain PYR-GCK) (Mycobacterium gilvum (strain PYR-GCK)).